A 33-amino-acid chain; its full sequence is Thrombin-like enzyme RP34 (33 aa).

The region spanning 1–33 (VIGGDEXDINEHRSLALMYXSWSHRFIXXGXLI) is the Peptidase S1 domain.

It belongs to the peptidase S1 family. Snake venom subfamily. As to quaternary structure, homodimer. Expressed by the venom gland.

Its subcellular location is the secreted. It catalyses the reaction Selective cleavage of Arg-|-Xaa bond in fibrinogen, to form fibrin, and release fibrinopeptide A. The specificity of further degradation of fibrinogen varies with species origin of the enzyme.. In terms of biological role, thrombin-like snake venom serine protease that displays clotting activity on fibrinogen. Shows both arginine-ester hydrolase and amidase activities on synthetic substrates. Also shows proteolytic activity toward casein. In Cerastes cerastes (Horned desert viper), this protein is Thrombin-like enzyme RP34.